Consider the following 556-residue polypeptide: Solute carrier family 22 member 1 (556 aa).

Topologically, residues 1–21 (MPTVDDVLEQVGEFGWFQKQA) are cytoplasmic. A helical membrane pass occupies residues 22-42 (FLLLCLISASLAPIYVGIVFL). Topologically, residues 43-150 (GFTPGHYCQN…LVCGDAWKVD (108 aa)) are extracellular. The N-linked (GlcNAc...) asparagine glycan is linked to N71. A helical membrane pass occupies residues 151-171 (LFQSCVNLGFFLGSLVVGYIA). Over 172 to 177 (DRFGRK) the chain is Cytoplasmic. Residues 178–198 (LCLLVTTLVTSVSGVLTAVAP) traverse the membrane as a helical segment. At 199 to 211 (DYTSMLLFRLLQG) the chain is on the extracellular side. Residues 212 to 231 (MVSKGSWVSGYTLITEFVGS) traverse the membrane as a helical segment. Topologically, residues 232 to 238 (GYRRTTA) are cytoplasmic. Residues 239 to 259 (ILYQMAFTVGLVGLAGVAYAI) form a helical membrane-spanning segment. The Extracellular portion of the chain corresponds to 260–263 (PDWR). A helical transmembrane segment spans residues 264-284 (WLQLAVSLPTFLFLLYYWFVP). Residues 284–288 (PESPR) carry the Proline-rich sequence motif. Residues 285–348 (ESPRWLLSQK…FRTPNLRKHT (64 aa)) lie on the Cytoplasmic side of the membrane. Residue S334 is modified to Phosphoserine. Residues 349–369 (VILMYLWFSCAVLYQGLIMHV) form a helical membrane-spanning segment. Topologically, residues 370-377 (GATGANLY) are extracellular. The helical transmembrane segment at 378–398 (LDFFYSSLVEFPAAFIILVTI) threads the bilayer. The Cytoplasmic portion of the chain corresponds to 399-403 (DRIGR). A helical transmembrane segment spans residues 404-424 (IYPIAASNLVTGAACLLMIFI). The Extracellular portion of the chain corresponds to 425 to 429 (PHELH). The chain crosses the membrane as a helical span at residues 430–452 (WLNVTLACLGRMGATIVLQMVCL). Over 453–465 (VNAELYPTFIRNL) the chain is Cytoplasmic. The helical transmembrane segment at 466–486 (GMMVCSALCDLGGIFTPFMVF) threads the bilayer. Topologically, residues 487–493 (RLMEVWQ) are extracellular. A helical transmembrane segment spans residues 494 to 514 (ALPLILFGVLGLTAGAMTLLL). The Cytoplasmic portion of the chain corresponds to 515 to 556 (PETKGVALPETIEEAENLGRRKSKAKENTIYLQVQTGKSSST). Phosphothreonine is present on T543.

It belongs to the major facilitator (TC 2.A.1) superfamily. Organic cation transporter (TC 2.A.1.19) family. Post-translationally, phosphorylated. As to expression, expressed in kidney cortex in S1, S2 segments of renal proximal tubules as well as in kidney medulla. Expressed throughout the liver lobuli, in hepatocytes surrounding the central veins. Expressed in enterocytes of villi and crypts in small intestine. Expressed in brain, in some white matter regions like the corpus callosum and in the granular layer of the cerebellum. Expressed in Sertoli cells in testis. Expressed in colon. Expressed in tracheal and bronchial ciliated epithelium in the respiratory tract. Expressed in spleen, moderately in skin, and weakly in the gastrointestinal tract, lung, thymus, muscle, and prostate. In terms of tissue distribution, expressed in kidney cortex and medulla. Expressed in intestine, liver and colon.

It localises to the basolateral cell membrane. The protein resides in the apical cell membrane. It is found in the lateral cell membrane. The protein localises to the basal cell membrane. Its subcellular location is the cell membrane. It carries out the reaction 1-methylnicotinamide(out) = 1-methylnicotinamide(in). The catalysed reaction is dopamine(out) = dopamine(in). The enzyme catalyses serotonin(out) = serotonin(in). It catalyses the reaction (R)-adrenaline(out) = (R)-adrenaline(in). It carries out the reaction (R)-noradrenaline(out) = (R)-noradrenaline(in). The catalysed reaction is histamine(out) = histamine(in). The enzyme catalyses guanidine(out) = guanidine(in). It catalyses the reaction choline(out) = choline(in). It carries out the reaction acetylcholine(in) = acetylcholine(out). The catalysed reaction is thiamine(in) = thiamine(out). The enzyme catalyses agmatine(out) = agmatine(in). It catalyses the reaction putrescine(out) = putrescine(in). It carries out the reaction spermidine(in) = spermidine(out). The catalysed reaction is (R)-carnitine(in) = (R)-carnitine(out). The enzyme catalyses O-isobutanoyl-(R)-carnitine(in) = O-isobutanoyl-(R)-carnitine(out). It catalyses the reaction O-acetyl-(R)-carnitine(in) = O-acetyl-(R)-carnitine(out). It carries out the reaction O-3-hydroxybutanoyl-(R)-carnitine(in) = O-3-hydroxybutanoyl-(R)-carnitine(out). The catalysed reaction is O-propanoyl-(R)-carnitine(in) = O-propanoyl-(R)-carnitine(out). The enzyme catalyses O-butanoyl-(R)-carnitine(in) = O-butanoyl-(R)-carnitine(out). It catalyses the reaction O-2-methylbutanoyl-(R)-carnitine(in) = O-2-methylbutanoyl-(R)-carnitine(out). It carries out the reaction O-3-methylbutanoyl-(R)-carnitine(in) = O-3-methylbutanoyl-(R)-carnitine(out). The catalysed reaction is O-hexanoyl-(R)-carnitine(in) = O-hexanoyl-(R)-carnitine(out). The enzyme catalyses L-histidyl-L-proline diketopiperazine(in) = L-histidyl-L-proline diketopiperazine(out). It catalyses the reaction (R)-salsolinol(in) = (R)-salsolinol(out). It carries out the reaction prostaglandin F2alpha(out) = prostaglandin F2alpha(in). The catalysed reaction is prostaglandin E2(out) = prostaglandin E2(in). Its activity is regulated as follows. Phosphorylation of the transporter leads to changes in its substrate affinity, resulting in a regulation of the transport activity. In contrast with human ortholog, ASP uptake is stimulated by protein kinase A (PKA) and C (PKC) and endogenous tyrosine kinase activation. ASP affinity is induced by PKC-dependent phosphorylation. Inhibited by cGMP, most likely through a cGMP-binding protein that interacts with OCT1. In terms of biological role, electrogenic voltage-dependent transporter that mediates the transport of a variety of organic cations such as endogenous bioactive amines, cationic drugs and xenobiotics. Functions as a pH- and Na(+)-independent, bidirectional transporter. Cation cellular uptake or release is driven by the electrochemical potential (i.e. membrane potential and concentration gradient) and substrate selectivity. Hydrophobicity is a major requirement for recognition in polyvalent substrates and inhibitors. Primarily expressed in the basolateral membrane of hepatocytes and proximal tubules and involved in the uptake and disposition of cationic compounds from the blood by hepatic and renal clearance. Most likely functions as an uptake carrier in enterocytes contributing to the intestinal excretion and elimination of organic cations from the systemic circulation. Transports endogenous monoamines such as N-1-methylnicotinamide (NMN), guanidine, neurotransmitters dopamine, serotonin, noradrenaline, adrenaline and histamine, and quaternary ammonium compound such as choline. Also transports natural polyamines such as spermidine, agmatine and putrescine at low affinity, but relatively high turnover. Involved in the hepatic uptake of vitamin B1/thiamine, hence regulating hepatic lipid and energy metabolism. Contributes to the influx and efflux of fatty acid carriers carnitines and acylcarnitines across the basolateral membrane of hepatocytes, from the liver to the systemic circulation and inversely and may be involved in regulating the systemic availability of hepatic acylcarnitines. Mediates the bidirectional transport of acetylcholine (ACh) at the apical membrane of ciliated cell in airway epithelium, thereby playing a role in luminal release of ACh from bronchial epithelium. Transports dopaminergic neuromodulators cyclo(his-pro) and salsolinol with lower efficency. Also capable of transporting non-amine endogenous compounds such as prostaglandin E2 (PGE2) and prostaglandin F2-alpha (PGF2-alpha). May contribute to the transport of cationic compounds in testis across the blood-testis-barrier. Also mediates the uptake of xenobiotics tributylmethylammonium (TBuMA), quinidine, N-methyl-quinine (NMQ), N-methyl-quinidine (NMQD) N-(4,4-azo-n-pentyl)-quinuclidine (APQ), azidoprocainamide methoiodide (AMP), N-(4,4-azo-n-pentyl)-21-deoxyajmalinium (APDA) and 4-(4-(dimethylamino)styryl)-N-methylpyridinium (ASP). Its function is as follows. Functional isoform capable of transporting TEA. In Rattus norvegicus (Rat), this protein is Solute carrier family 22 member 1.